The sequence spans 235 residues: Enolase-phosphatase E1 (235 aa).

Mg(2+) contacts are provided by Asp-10 and Glu-12. Residues 130 to 131 (SS) and Lys-169 contribute to the substrate site. Asp-194 is a Mg(2+) binding site.

The protein belongs to the HAD-like hydrolase superfamily. MasA/MtnC family. Monomer. Requires Mg(2+) as cofactor.

Its subcellular location is the cytoplasm. The protein localises to the nucleus. It carries out the reaction 5-methylsulfanyl-2,3-dioxopentyl phosphate + H2O = 1,2-dihydroxy-5-(methylsulfanyl)pent-1-en-3-one + phosphate. The protein operates within amino-acid biosynthesis; L-methionine biosynthesis via salvage pathway; L-methionine from S-methyl-5-thio-alpha-D-ribose 1-phosphate: step 3/6. It functions in the pathway amino-acid biosynthesis; L-methionine biosynthesis via salvage pathway; L-methionine from S-methyl-5-thio-alpha-D-ribose 1-phosphate: step 4/6. Its function is as follows. Bifunctional enzyme that catalyzes the enolization of 2,3-diketo-5-methylthiopentyl-1-phosphate (DK-MTP-1-P) into the intermediate 2-hydroxy-3-keto-5-methylthiopentenyl-1-phosphate (HK-MTPenyl-1-P), which is then dephosphorylated to form the acireductone 1,2-dihydroxy-3-keto-5-methylthiopentene (DHK-MTPene). This Komagataella phaffii (strain GS115 / ATCC 20864) (Yeast) protein is Enolase-phosphatase E1.